A 321-amino-acid polypeptide reads, in one-letter code: Glutamyl-Q tRNA(Asp) synthetase (321 aa).

L-glutamate is bound by residues 25-29 (RFAPS) and glutamate 61. Residues 28 to 38 (PSPSGDLHFGS) carry the 'HIGH' region motif. Cysteine 117, cysteine 119, tyrosine 131, and cysteine 135 together coordinate Zn(2+). Tyrosine 188 and arginine 206 together coordinate L-glutamate. A 'KMSKS' region motif is present at residues 244 to 248 (KLSKQ). Lysine 247 is an ATP binding site.

The protein belongs to the class-I aminoacyl-tRNA synthetase family. GluQ subfamily. It depends on Zn(2+) as a cofactor.

Functionally, catalyzes the tRNA-independent activation of glutamate in presence of ATP and the subsequent transfer of glutamate onto a tRNA(Asp). Glutamate is transferred on the 2-amino-5-(4,5-dihydroxy-2-cyclopenten-1-yl) moiety of the queuosine in the wobble position of the QUC anticodon. This is Glutamyl-Q tRNA(Asp) synthetase from Yersinia pestis.